The following is a 647-amino-acid chain: Exoribonuclease 2 (647 aa).

The RNB domain maps to 191–517 (REDLCALPFV…VNHRLLKALI (327 aa)). The 83-residue stretch at 563–645 (PTPFNAEIID…DTRSLIARPF (83 aa)) folds into the S1 motif domain.

This sequence belongs to the RNR ribonuclease family. RNase II subfamily.

It localises to the cytoplasm. The catalysed reaction is Exonucleolytic cleavage in the 3'- to 5'-direction to yield nucleoside 5'-phosphates.. Functionally, involved in mRNA degradation. Hydrolyzes single-stranded polyribonucleotides processively in the 3' to 5' direction. The protein is Exoribonuclease 2 of Edwardsiella piscicida.